The primary structure comprises 516 residues: Cytochrome P450 monooxygenase otaC (516 aa).

The helical transmembrane segment at 13 to 30 (FLWTAFAVGVVYCCTRMV) threads the bilayer. Position 454 (cysteine 454) interacts with heme.

The protein belongs to the cytochrome P450 family. Heme is required as a cofactor.

It is found in the membrane. The catalysed reaction is 7-methylmellein + 3 reduced [NADPH--hemoprotein reductase] + 3 O2 = 7-carboxymellein + 3 oxidized [NADPH--hemoprotein reductase] + 4 H2O + 4 H(+). It participates in mycotoxin biosynthesis. Its function is as follows. Cytochrome P450 monooxygenase; part of the gene cluster that mediates the biosynthesis of ochratoxin A (OTA), a mycotoxin composed of a chlorinated type I polyketide dihydroisocoumarin moiety linked to L-phenylalanine, and demonstrated to have nephrotoxic, immunotoxic, genotoxic, neurotoxic, and teratogenic properties. OtaC catalyzes the oxidation of 7-methylmellein (7-MM) into 7-carboxymellein. The pathway begins with the highly reducing polyketide synthase otaA that catalyzes the formation of the isocoumarin group during the initial stages of biosynthesis, starting from one acetate and 4 malonate units, to originate the characteristic pentaketide skeleton 7-methylmellein (7-MM) of the OTA molecule. The newly identified cyclase otaY might be involved in the polyketide cyclization reaction during the initial steps of the OTA biosynthesis. 7-MM is then oxidized into 7-carboxymellein (also called ochratoxin beta) by the cytochrome P450 monooxygenase otaC. The NRPS encoded by the otaB gene is involved in the linking of phenylalanine to the dihydroisocoumarin ring. The reaction catalyzed by NRPS results in the production of ochratoxin B (OTB), which is the non-chlorinated analog of OTA and which subsequently serves as the substrate of the halogenase otaD for chlorination activity to form the final molecular structure of OTA, containing a chlorine atom in the C-5 position of the molecule. This is Cytochrome P450 monooxygenase otaC from Aspergillus carbonarius (strain ITEM 5010).